Here is a 509-residue protein sequence, read N- to C-terminus: Coiled-coil domain-containing protein 181 (509 aa).

Residues 58-82 are compositionally biased toward basic and acidic residues; sequence VIEHTKQHSDPDKSLQDEVSPRKND. Disordered stretches follow at residues 58–120, 241–332, and 345–367; these read VIEH…EEED, PINN…VTST, and QLEQKREKLKREEERRKIEEEKE. 2 stretches are compositionally biased toward polar residues: residues 243–266 and 300–332; these read NNANTTENDPQQLLPRSSNSSVSG and TCPSSAVISDQSKGNGNSNHRAQSAHISPVTST. Residues 335–375 are a coiled coil; the sequence is LSPRQKELQKQLEQKREKLKREEERRKIEEEKEKKRENDIV.

The protein belongs to the CCDC181 family. Homodimer. Interacts with HOOK1. Interacts with HOOK2. Interacts with HOOK3.

The protein localises to the cytoplasm. Its subcellular location is the cytoskeleton. It is found in the cell projection. It localises to the cilium. The protein resides in the flagellum. Microtubule-binding protein that localizes to the microtubular manchette of elongating spermatids. This is Coiled-coil domain-containing protein 181 from Pongo abelii (Sumatran orangutan).